The chain runs to 321 residues: tRNA(Ile)-lysidine synthase (321 aa).

21–26 (SYGSDS) serves as a coordination point for ATP.

This sequence belongs to the tRNA(Ile)-lysidine synthase family.

Its subcellular location is the cytoplasm. The catalysed reaction is cytidine(34) in tRNA(Ile2) + L-lysine + ATP = lysidine(34) in tRNA(Ile2) + AMP + diphosphate + H(+). In terms of biological role, ligates lysine onto the cytidine present at position 34 of the AUA codon-specific tRNA(Ile) that contains the anticodon CAU, in an ATP-dependent manner. Cytidine is converted to lysidine, thus changing the amino acid specificity of the tRNA from methionine to isoleucine. The polypeptide is tRNA(Ile)-lysidine synthase (Campylobacter jejuni (strain RM1221)).